The primary structure comprises 31 residues: Photosystem II reaction center protein T (31 aa).

Residues 3 to 23 (ALVYTFLLVGTLGIIFFAIFF) form a helical membrane-spanning segment.

This sequence belongs to the PsbT family. In terms of assembly, PSII is composed of 1 copy each of membrane proteins PsbA, PsbB, PsbC, PsbD, PsbE, PsbF, PsbH, PsbI, PsbJ, PsbK, PsbL, PsbM, PsbT, PsbY, PsbZ, Psb30/Ycf12, at least 3 peripheral proteins of the oxygen-evolving complex and a large number of cofactors. It forms dimeric complexes.

It localises to the plastid. The protein localises to the chloroplast thylakoid membrane. Its function is as follows. Found at the monomer-monomer interface of the photosystem II (PS II) dimer, plays a role in assembly and dimerization of PSII. PSII is a light-driven water plastoquinone oxidoreductase, using light energy to abstract electrons from H(2)O, generating a proton gradient subsequently used for ATP formation. This chain is Photosystem II reaction center protein T, found in Mesostigma viride (Green alga).